A 190-amino-acid chain; its full sequence is Potassium-transporting ATPase KdpC subunit (190 aa).

The chain crosses the membrane as a helical span at residues threonine 10–glycine 30.

This sequence belongs to the KdpC family. In terms of assembly, the system is composed of three essential subunits: KdpA, KdpB and KdpC.

The protein resides in the cell inner membrane. Its function is as follows. Part of the high-affinity ATP-driven potassium transport (or Kdp) system, which catalyzes the hydrolysis of ATP coupled with the electrogenic transport of potassium into the cytoplasm. This subunit acts as a catalytic chaperone that increases the ATP-binding affinity of the ATP-hydrolyzing subunit KdpB by the formation of a transient KdpB/KdpC/ATP ternary complex. This chain is Potassium-transporting ATPase KdpC subunit, found in Escherichia coli O9:H4 (strain HS).